A 150-amino-acid chain; its full sequence is SsrA-binding protein (150 aa).

It belongs to the SmpB family.

The protein resides in the cytoplasm. Functionally, required for rescue of stalled ribosomes mediated by trans-translation. Binds to transfer-messenger RNA (tmRNA), required for stable association of tmRNA with ribosomes. tmRNA and SmpB together mimic tRNA shape, replacing the anticodon stem-loop with SmpB. tmRNA is encoded by the ssrA gene; the 2 termini fold to resemble tRNA(Ala) and it encodes a 'tag peptide', a short internal open reading frame. During trans-translation Ala-aminoacylated tmRNA acts like a tRNA, entering the A-site of stalled ribosomes, displacing the stalled mRNA. The ribosome then switches to translate the ORF on the tmRNA; the nascent peptide is terminated with the 'tag peptide' encoded by the tmRNA and targeted for degradation. The ribosome is freed to recommence translation, which seems to be the essential function of trans-translation. This chain is SsrA-binding protein, found in Campylobacter jejuni (strain RM1221).